The chain runs to 233 residues: ATP-dependent dethiobiotin synthetase BioD (233 aa).

12 to 17 (EVGKTY) serves as a coordination point for ATP. Threonine 16 lines the Mg(2+) pocket. Residue lysine 37 is part of the active site. ATP-binding positions include aspartate 54, 120-123 (EGAG), and 186-187 (ND). Residues aspartate 54 and glutamate 120 each contribute to the Mg(2+) site.

The protein belongs to the dethiobiotin synthetase family. In terms of assembly, homodimer. The cofactor is Mg(2+).

It localises to the cytoplasm. The enzyme catalyses (7R,8S)-7,8-diammoniononanoate + CO2 + ATP = (4R,5S)-dethiobiotin + ADP + phosphate + 3 H(+). Its pathway is cofactor biosynthesis; biotin biosynthesis; biotin from 7,8-diaminononanoate: step 1/2. Functionally, catalyzes a mechanistically unusual reaction, the ATP-dependent insertion of CO2 between the N7 and N8 nitrogen atoms of 7,8-diaminopelargonic acid (DAPA, also called 7,8-diammoniononanoate) to form a ureido ring. This Alteromonas mediterranea (strain DSM 17117 / CIP 110805 / LMG 28347 / Deep ecotype) protein is ATP-dependent dethiobiotin synthetase BioD.